The primary structure comprises 306 residues: Acetyl-coenzyme A carboxylase carboxyl transferase subunit beta (306 aa).

The 270-residue stretch at 27–296 folds into the CoA carboxyltransferase N-terminal domain; sequence LWHKCPSCEA…PRFVAPVIEP (270 aa). Residues cysteine 31, cysteine 34, cysteine 50, and cysteine 53 each contribute to the Zn(2+) site. The C4-type zinc finger occupies 31–53; sequence CPSCEAVLYRPELEKTLDVCPKC.

The protein belongs to the AccD/PCCB family. In terms of assembly, acetyl-CoA carboxylase is a heterohexamer composed of biotin carboxyl carrier protein (AccB), biotin carboxylase (AccC) and two subunits each of ACCase subunit alpha (AccA) and ACCase subunit beta (AccD). The cofactor is Zn(2+).

The protein localises to the cytoplasm. The enzyme catalyses N(6)-carboxybiotinyl-L-lysyl-[protein] + acetyl-CoA = N(6)-biotinyl-L-lysyl-[protein] + malonyl-CoA. Its pathway is lipid metabolism; malonyl-CoA biosynthesis; malonyl-CoA from acetyl-CoA: step 1/1. In terms of biological role, component of the acetyl coenzyme A carboxylase (ACC) complex. Biotin carboxylase (BC) catalyzes the carboxylation of biotin on its carrier protein (BCCP) and then the CO(2) group is transferred by the transcarboxylase to acetyl-CoA to form malonyl-CoA. This Pseudomonas savastanoi pv. phaseolicola (strain 1448A / Race 6) (Pseudomonas syringae pv. phaseolicola (strain 1448A / Race 6)) protein is Acetyl-coenzyme A carboxylase carboxyl transferase subunit beta.